Here is a 326-residue protein sequence, read N- to C-terminus: Dipeptide transport ATP-binding protein DppD (326 aa).

Residues Ile5 to Ile255 form the ABC transporter domain. ATP-binding positions include Ala44–Thr49, Asn61, and Gln97. [4Fe-4S] cluster is bound by residues Cys285, Cys291, Cys298, and Cys316.

It belongs to the ABC transporter superfamily.

The protein localises to the cell membrane. It catalyses the reaction a dipeptide(out) + ATP + H2O = a dipeptide(in) + ADP + phosphate + H(+). The C-terminal iron-sulfur cluster may stabilize the structure of the C-terminal loops and may function in the regulation of the transport process. Its function is as follows. Part of the ABC transporter Dpp involved in dipeptide transport. Responsible for energy coupling to the transport system. In Caldanaerobacter subterraneus subsp. tengcongensis (strain DSM 15242 / JCM 11007 / NBRC 100824 / MB4) (Thermoanaerobacter tengcongensis), this protein is Dipeptide transport ATP-binding protein DppD.